Reading from the N-terminus, the 1093-residue chain is Small G protein signaling modulator 1 (1093 aa).

The RUN domain maps to His36–His190. The important for interaction with RAB9A and RAB9B stretch occupies residues Leu256–Met297. A required for interaction with RAP family members region spans residues Val301 to Pro350. Disordered regions lie at residues Asp377 to Asp412, Asp645 to Val778, and Asp810 to Glu838. The segment covering Gly385–Ser397 has biased composition (basic residues). The Rab-GAP TBC domain occupies Gly562–Lys1026. Residues Thr647 to Phe676 are compositionally biased toward polar residues. Positions Ala687–Pro696 are enriched in basic and acidic residues. The span at Asn702–Asp736 shows a compositional bias: polar residues. Basic and acidic residues-rich tracts occupy residues Thr766 to Leu776 and Glu820 to Ser829.

The protein belongs to the RUTBC family. Interacts with RAB9A (GTP-bound form) and RAB9B. Interacts with RAB3A, RAB4A, RAB5A, RAB8A, RAB11A, RAP1A, RAP1B, RAP2A and RAP2B. No interaction with RAB27A. In terms of tissue distribution, expressed only in brain.

The protein localises to the golgi apparatus. It localises to the trans-Golgi network. The protein resides in the cytoplasm. Its subcellular location is the cytoplasmic vesicle membrane. Its function is as follows. Interacts with numerous Rab family members, functioning as Rab effector for some, and as GTPase activator for others. Promotes GTP hydrolysis by RAB34 and RAB36. Probably functions as a GTPase effector with RAB9A and RAB9B; does not stimulate GTP hydrolysis with RAB9A and RAB9B. The chain is Small G protein signaling modulator 1 (Sgsm1) from Mus musculus (Mouse).